Reading from the N-terminus, the 371-residue chain is Cytochrome b (371 aa).

4 consecutive transmembrane segments (helical) span residues 25–45, 69–90, 105–125, and 170–190; these read FGSMLLTCSALQVMTGFFLAI, WIMQNLHAIGASMFFICIYIHI, WLSGTTLLIILMATAFFGYVL, and FFALHFILPFAIISMSSIHIM. His75 and His89 together coordinate heme b. Positions 174 and 188 each coordinate heme b. His193 is an a ubiquinone binding site. 4 consecutive transmembrane segments (helical) span residues 218 to 238, 280 to 300, 312 to 332, and 339 to 358; these read HKDILMLTIMITTMFTIMSFS, LGGTVALVLSVAILMTMPFTH, IMQLVFWTLIATFITITWAAT, and FTIIGQTTSFLYFSFFIMNP.

It belongs to the cytochrome b family. In terms of assembly, the cytochrome bc1 complex contains 3 respiratory subunits (MT-CYB, CYC1 and UQCRFS1), 2 core proteins (UQCRC1 and UQCRC2) and probably 6 low-molecular weight proteins. It depends on heme b as a cofactor.

The protein localises to the mitochondrion inner membrane. In terms of biological role, component of the ubiquinol-cytochrome c reductase complex (complex III or cytochrome b-c1 complex) that is part of the mitochondrial respiratory chain. The b-c1 complex mediates electron transfer from ubiquinol to cytochrome c. Contributes to the generation of a proton gradient across the mitochondrial membrane that is then used for ATP synthesis. The polypeptide is Cytochrome b (MT-CYB) (Coluber constrictor (Eastern racer)).